The sequence spans 311 residues: Homeobox-leucine zipper protein HOX1 (311 aa).

Disordered stretches follow at residues Ala29 to Arg69 and Ala97 to Arg160. Positions Ser119–Ala145 are enriched in low complexity. Positions Gly154–Gln213 form a DNA-binding region, homeobox. The tract at residues Lys212–His256 is leucine-zipper. A disordered region spans residues Ser279 to Ala311. Residues Ala280–Gly289 show a composition bias toward polar residues. Pro residues predominate over residues Arg294–Pro303.

This sequence belongs to the HD-ZIP homeobox family. Class II subfamily. As to quaternary structure, homodimer. May form a heterodimer with HOX2, HOX3 or HOX7. As to expression, expressed in root provascular and vascular cylinder, provascular and vascular strands of leaves, provascular and vascular strands of the whole panicle, in mature embryo provascular bundles of scutellum and embryonic axis and provascular and vascular strands of young immature spikelet organs. Expressed in differentiating and differentiated xylem and phloem elements, and in outer and inner bundle sheath cells of all vascular bundles. Expressed in auricles, ligules, culm, guard cells brac hairs and pollen.

It localises to the nucleus. Functionally, probable transcription repressor involved leaf development. Binds to the DNA sequence 5'-CAAT[GC]ATTG-3'. May act as a regulatory switch to specify provascular cell fate. The polypeptide is Homeobox-leucine zipper protein HOX1 (HOX1) (Oryza sativa subsp. japonica (Rice)).